A 376-amino-acid chain; its full sequence is Quinolinate synthase (376 aa).

Positions 57 and 78 each coordinate iminosuccinate. Cys-123 serves as a coordination point for [4Fe-4S] cluster. Residues 149 to 151 (YAN) and Ser-166 contribute to the iminosuccinate site. A [4Fe-4S] cluster-binding site is contributed by Cys-210. Residues 236–238 (HPE) and Thr-253 each bind iminosuccinate. Residue Cys-307 coordinates [4Fe-4S] cluster.

It belongs to the quinolinate synthase family. Type 1 subfamily. The cofactor is [4Fe-4S] cluster.

The protein localises to the cytoplasm. It carries out the reaction iminosuccinate + dihydroxyacetone phosphate = quinolinate + phosphate + 2 H2O + H(+). It participates in cofactor biosynthesis; NAD(+) biosynthesis; quinolinate from iminoaspartate: step 1/1. Its function is as follows. Catalyzes the condensation of iminoaspartate with dihydroxyacetone phosphate to form quinolinate. In Paraburkholderia phymatum (strain DSM 17167 / CIP 108236 / LMG 21445 / STM815) (Burkholderia phymatum), this protein is Quinolinate synthase.